We begin with the raw amino-acid sequence, 212 residues long: Putative tyrosine-protein phosphatase OCA1 (212 aa).

Residues 1-27 (MSNKDTSILKGNVDHEEADSNPKLRKI) form a disordered region. Basic and acidic residues predominate over residues 12 to 22 (NVDHEEADSNP). Residues 40–208 (NFCPVERQLY…SVEIDPSKVP (169 aa)) form the Tyrosine-protein phosphatase domain. Cysteine 146 (phosphocysteine intermediate) is an active-site residue.

The protein belongs to the protein-tyrosine phosphatase family.

It is found in the cytoplasm. It catalyses the reaction O-phospho-L-tyrosyl-[protein] + H2O = L-tyrosyl-[protein] + phosphate. Putative tyrosine-protein phosphatase required for protection against superoxide stress. The sequence is that of Putative tyrosine-protein phosphatase OCA1 (OCA1) from Scheffersomyces stipitis (strain ATCC 58785 / CBS 6054 / NBRC 10063 / NRRL Y-11545) (Yeast).